Consider the following 711-residue polypeptide: Serine/threonine-protein kinase ATG1b (711 aa).

A Protein kinase domain is found at 20-277; that stretch reads YAVGRQIGSG…FEEFFHHPFL (258 aa). Residues 26 to 34 and Lys49 each bind ATP; that span reads IGSGSFSVV. Asp142 serves as the catalytic Proton acceptor. 2 disordered regions span residues 318 to 342 and 383 to 419; these read LPFFLDDDSSGPEGSPSSFKHTSPM and FEGHRLSDRSQFKPSSLPDSRSFSTQGRGDSPDSMDQ. The segment covering 383–393 has biased composition (basic and acidic residues); the sequence is FEGHRLSDRSQ. A compositionally biased stretch (polar residues) spans 394–410; that stretch reads FKPSSLPDSRSFSTQGR. The AIM (Atg8-family-interacting motif) motif lies at 421-424; it reads YVLI.

This sequence belongs to the protein kinase superfamily. Ser/Thr protein kinase family.

The protein localises to the cytoplasmic vesicle. It is found in the autophagosome. Its function is as follows. Serine/threonine protein kinase involved in autophagy. The ATG1-ATG13 protein kinase complex regulates downstream events required for autophagosome enclosure and/or vacuolar delivery. The protein is Serine/threonine-protein kinase ATG1b of Arabidopsis thaliana (Mouse-ear cress).